Reading from the N-terminus, the 428-residue chain is Dihydroorotase (428 aa).

2 residues coordinate Zn(2+): histidine 61 and histidine 63. Residues 63–65 (HLR) and asparagine 95 each bind substrate. The Zn(2+) site is built by aspartate 153, histidine 180, and histidine 233. Asparagine 279 serves as a coordination point for substrate. Residue aspartate 306 participates in Zn(2+) binding. Residue aspartate 306 is part of the active site. Substrate-binding positions include histidine 310 and 324–325 (FG).

Belongs to the metallo-dependent hydrolases superfamily. DHOase family. Class I DHOase subfamily. Zn(2+) is required as a cofactor.

It catalyses the reaction (S)-dihydroorotate + H2O = N-carbamoyl-L-aspartate + H(+). The protein operates within pyrimidine metabolism; UMP biosynthesis via de novo pathway; (S)-dihydroorotate from bicarbonate: step 3/3. Catalyzes the reversible cyclization of carbamoyl aspartate to dihydroorotate. This is Dihydroorotase from Geobacillus thermodenitrificans (strain NG80-2).